A 247-amino-acid polypeptide reads, in one-letter code: tRNA uridine(34) hydroxylase (247 aa).

The region spanning 124 to 218 is the Rhodanese domain; it reads TQQDVIVIDT…YLEDTQNKNN (95 aa). Residue Cys178 is the Cysteine persulfide intermediate of the active site.

It belongs to the TrhO family.

The enzyme catalyses uridine(34) in tRNA + AH2 + O2 = 5-hydroxyuridine(34) in tRNA + A + H2O. Functionally, catalyzes oxygen-dependent 5-hydroxyuridine (ho5U) modification at position 34 in tRNAs. In Rickettsia conorii (strain ATCC VR-613 / Malish 7), this protein is tRNA uridine(34) hydroxylase.